A 132-amino-acid polypeptide reads, in one-letter code: Small ribosomal subunit protein uS8 (132 aa).

This sequence belongs to the universal ribosomal protein uS8 family. As to quaternary structure, part of the 30S ribosomal subunit. Contacts proteins S5 and S12.

Its function is as follows. One of the primary rRNA binding proteins, it binds directly to 16S rRNA central domain where it helps coordinate assembly of the platform of the 30S subunit. This chain is Small ribosomal subunit protein uS8, found in Aliarcobacter butzleri (strain RM4018) (Arcobacter butzleri).